The chain runs to 65 residues: NADH dehydrogenase [ubiquinone] 1 alpha subcomplex subunit 1 (65 aa).

Residues 3–23 (LVWLEAMLPLGIIGGMLCIMG) traverse the membrane as a helical segment.

Belongs to the complex I NDUFA1 subunit family. As to quaternary structure, complex I is composed of at least 49 different subunits.

Its subcellular location is the mitochondrion inner membrane. Its function is as follows. Accessory subunit of the mitochondrial membrane respiratory chain NADH dehydrogenase (Complex I), that is believed not to be involved in catalysis. Complex I functions in the transfer of electrons from NADH to the respiratory chain. The immediate electron acceptor for the enzyme is believed to be ubiquinone. This is NADH dehydrogenase [ubiquinone] 1 alpha subcomplex subunit 1 from Arabidopsis thaliana (Mouse-ear cress).